Reading from the N-terminus, the 131-residue chain is Histone H2B.2 (131 aa).

Residues 1–20 (MAPPKAEKKPASKAPAEKKP) show a composition bias toward basic and acidic residues. Residues 1 to 39 (MAPPKAEKKPASKAPAEKKPAAKKTASSTDAKKRTKTRK) are disordered. An N6-acetyllysine; alternate mark is found at Lys8 and Lys9. Glycyl lysine isopeptide (Lys-Gly) (interchain with G-Cter in SUMO); alternate cross-links involve residues Lys8 and Lys9. Phosphoserine is present on Ser12. An N6-acetyllysine modification is found at Lys13. An N6-acetyllysine; alternate modification is found at Lys18. Lys18 is covalently cross-linked (Glycyl lysine isopeptide (Lys-Gly) (interchain with G-Cter in SUMO); alternate). A Glycyl lysine isopeptide (Lys-Gly) (interchain with G-Cter in SUMO) cross-link involves residue Lys19. A Glycyl lysine isopeptide (Lys-Gly) (interchain with G-Cter in ubiquitin) cross-link involves residue Lys125.

This sequence belongs to the histone H2B family. As to quaternary structure, the nucleosome is a histone octamer containing two molecules each of H2A, H2B, H3 and H4 assembled in one H3-H4 heterotetramer and two H2A-H2B heterodimers. The octamer wraps approximately 147 bp of DNA. Monoubiquitinated to form H2BK123ub1. H2BK123ub1 gives a specific tag for epigenetic transcriptional activation and is also prerequisite for H3K4me and H3K79me formation. H2BK123ub1 also modulates the formation of double-strand breaks during meiosis and is a prerequisite for DNA-damage checkpoint activation. Post-translationally, phosphorylated by STE20 to form H2BS10ph during progression through meiotic prophase. May be correlated with chromosome condensation. In terms of processing, acetylated by GCN5 to form H2BK11ac and H2BK16ac. H2BK16ac can also be formed by ESA1. Acetylation of N-terminal lysines and particularly formation of H2BK11acK16ac has a positive effect on transcription. Sumoylation to form H2BK6su or H2BK7su, and probably also H2BK16su or H2BK17su, occurs preferentially near the telomeres and represses gene transcription.

The protein localises to the nucleus. It localises to the chromosome. Core component of nucleosome. Nucleosomes wrap and compact DNA into chromatin, limiting DNA accessibility to the cellular machineries which require DNA as a template. Histones thereby play a central role in transcription regulation, DNA repair, DNA replication and chromosomal stability. DNA accessibility is regulated via a complex set of post-translational modifications of histones, also called histone code, and nucleosome remodeling. This chain is Histone H2B.2 (HTB2), found in Scheffersomyces stipitis (strain ATCC 58785 / CBS 6054 / NBRC 10063 / NRRL Y-11545) (Yeast).